Reading from the N-terminus, the 276-residue chain is Urease accessory protein UreD (276 aa).

This sequence belongs to the UreD family. In terms of assembly, ureD, UreF and UreG form a complex that acts as a GTP-hydrolysis-dependent molecular chaperone, activating the urease apoprotein by helping to assemble the nickel containing metallocenter of UreC. The UreE protein probably delivers the nickel.

The protein localises to the cytoplasm. In terms of biological role, required for maturation of urease via the functional incorporation of the urease nickel metallocenter. This is Urease accessory protein UreD from Albidiferax ferrireducens (strain ATCC BAA-621 / DSM 15236 / T118) (Rhodoferax ferrireducens).